The primary structure comprises 207 residues: Protein lin-7 homolog B (207 aa).

Residues 1-13 (MAALVEPLGLERD) carry the Kinase interacting site motif. An L27 domain is found at 10–65 (LERDVSRAVELLERLQRSGELPPQKLQALQRVLQSRFCSAIREVYEQLYDTLDITG). The 83-residue stretch at 93–175 (VVELPKTDEG…SVKLVVRYTP (83 aa)) folds into the PDZ domain. The tract at residues 187–207 (KMRSARRRQQHQSYSSLESRG) is disordered. Over residues 197-207 (HQSYSSLESRG) the composition is skewed to polar residues.

This sequence belongs to the lin-7 family. Forms a complex with CASK and CASKIN1. Component of the brain-specific heterotrimeric complex (LIN-10-LIN-2-LIN-7 complex) composed of at least APBA1, CASK, and LIN7, which associates with the motor protein KIF17 to transport vesicles along microtubules. Forms a heterotrimeric complex composed of MMP5, LIN7B and PATJ; the N-terminal L27 domain of PALS1 interacts with the L27 domain of PATJ and the C-terminal L27 domain of PALS1 interacts with the L27 domain of LIN7B. Forms a heterotrimeric complex with DLG1 and CASK via their L27 domains. Interacts with DLG4 and GRIN2B as well as CDH1 and CTNNB1, the channels KCNJ12/Kir2.2, KCNJ4/Kir2.3 and probably KCNJ2/Kir2.1 and SLC6A12/BGT-1 via its PDZ domain. The association of LIN7A with cadherin and beta-catenin is calcium-dependent, occurs at synaptic junctions and requires the actin cytoskeleton. Interacts with EGFR, ERBB2, ERBB3 and ERBB4 with both PDZ and KID domains. Associates with KIF17 via APBA1. Interacts with ASIC3. Interacts with TOPK. Interacts with RTKN. Interacts with APBA1. Interacts with MPP7. Interacts with DLG2. Interacts with DLG3.

It is found in the cell membrane. The protein resides in the basolateral cell membrane. The protein localises to the cell junction. It localises to the postsynaptic density membrane. Its subcellular location is the tight junction. Functionally, plays a role in establishing and maintaining the asymmetric distribution of channels and receptors at the plasma membrane of polarized cells. Forms membrane-associated multiprotein complexes that may regulate delivery and recycling of proteins to the correct membrane domains. The tripartite complex composed of LIN7 (LIN7A, LIN7B or LIN7C), CASK and APBA1 associates with the motor protein KIF17 to transport vesicles containing N-methyl-D-aspartate (NMDA) receptor subunit NR2B along microtubules. This complex may have the potential to couple synaptic vesicle exocytosis to cell adhesion in brain. Ensures the proper localization of GRIN2B (subunit 2B of the NMDA receptor) to neuronal postsynaptic density and may function in localizing synaptic vesicles at synapses where it is recruited by beta-catenin and cadherin. Required to localize Kir2 channels, GABA transporter (SLC6A12) and EGFR/ERBB1, ERBB2, ERBB3 and ERBB4 to the basolateral membrane of epithelial cells. May increase the amplitude of ASIC3 acid-evoked currents by stabilizing the channel at the cell surface. The protein is Protein lin-7 homolog B (LIN7B) of Homo sapiens (Human).